A 1559-amino-acid polypeptide reads, in one-letter code: Bile pigment transporter 1 (1559 aa).

At 1–29 (MSSLEVVDGCPYGYRPYPDSGTNALNPCF) the chain is on the vacuolar side. Residues 30–50 (ISVISAWQAVFFLLIGSYQLW) traverse the membrane as a helical segment. Residues 51–84 (KLYKNNKVPPRFKNFPTLPSKINSRHLTHLTNVC) are Cytoplasmic-facing. Residues 85–105 (FQSTLIICELALVSQSSDRVY) traverse the membrane as a helical segment. Topologically, residues 106 to 110 (PFILK) are vacuolar. Residues 111 to 127 (KALYLNLLFNLGISLPT) form a helical membrane-spanning segment. Residues 128–139 (QYLAYFKSTFSM) are Cytoplasmic-facing. The helical transmembrane segment at 140–160 (GNQLFYYMFQILLQLFLILQR) threads the bilayer. Over 161-178 (YYHGSSNERLTVISGQTA) the chain is Vacuolar. A helical transmembrane segment spans residues 179-199 (MILEVLLLFNSVAIFIYDLCI). The Cytoplasmic segment spans residues 200–283 (FEPINELSEY…WLNRNSLWRA (84 aa)). Residues 284–304 (IWKSFGRTISVAMLYETTSDL) traverse the membrane as a helical segment. The region spanning 292 to 578 (ISVAMLYETT…VPSMINTIIE (287 aa)) is the ABC transmembrane type-1 1 domain. Over 305–333 (LSVVQPQFLRIFIDGLNPETSSKYPPLNG) the chain is Vacuolar. The helical transmembrane segment at 334–354 (VFIALTLFVISVVSVFLTNQF) threads the bilayer. Residues 355–410 (YIGIFEAGLGIRGSLASLVYQKSLRLTLAERNEKSTGDILNLMSVDVLRIQRFFEN) lie on the Cytoplasmic side of the membrane. A helical transmembrane segment spans residues 411–431 (AQTIIGAPIQIIVVLTSLYWL). Over 432–434 (LGK) the chain is Vacuolar. The chain crosses the membrane as a helical span at residues 435–455 (AVIGGLVTMAIMMPINAFLSR). Over 456-518 (KVKKLSKTQM…NFRKIGIVSN (63 aa)) the chain is Cytoplasmic. A helical membrane pass occupies residues 519 to 539 (LIYFAWNCVPLMVTCSTFGLF). The Vacuolar segment spans residues 540–560 (SLFSDSPLSPAIVFPSLSLFN). The chain crosses the membrane as a helical span at residues 561-581 (ILNSAIYSVPSMINTIIETSV). Residues 582 to 972 (SMERLKSFLL…VKTKIYLAYI (391 aa)) lie on the Cytoplasmic side of the membrane. The ABC transporter 1 domain occupies 639 to 871 (LRTDEESIIG…KNNTSKLKKL (233 aa)). Ser-645 is modified (phosphoserine). 672–679 (GRVGAGKS) lines the ATP pocket. A disordered region spans residues 877 to 899 (SPIDNGNESDVQTEHRSESEVDE). Residue Ser-885 is modified to Phosphoserine. Thr-889 is modified (phosphothreonine). Residues Ser-893 and Ser-895 each carry the phosphoserine modification. Thr-916 is modified (phosphothreonine). Phosphoserine occurs at positions 927 and 931. Thr-934 carries the post-translational modification Phosphothreonine. The helical transmembrane segment at 973-993 (KACGVLGVVLFFLFMILTRVF) threads the bilayer. The ABC transmembrane type-1 2 domain occupies 980 to 1265 (VVLFFLFMIL…IVRTTVTIET (286 aa)). Over 994–1030 (DLAENFWLKYWSESNEKNGSNERVWMFVGVYSLIGVA) the chain is Vacuolar. Asn-1011 carries an N-linked (GlcNAc...) asparagine glycan. The chain crosses the membrane as a helical span at residues 1031 to 1052 (SAAFNNLRSIMMLLYCSIRGSK). Residues 1053–1095 (KLHESMAKSVIRSPMTFFETTPVGRIINRFSSDMDAVDSNLQY) lie on the Cytoplasmic side of the membrane. Residues 1096 to 1116 (IFSFFFKSILTYLVTVILVGY) traverse the membrane as a helical segment. A topological domain (vacuolar) is located at residue Asn-1117. The helical transmembrane segment at 1118–1138 (MPWFLVFNMFLVVIYIYYQTF) threads the bilayer. Residues 1139–1209 (YIVLSRELKR…STNRWLSVRL (71 aa)) lie on the Cytoplasmic side of the membrane. Residues 1210 to 1230 (QTIGATIVLATAILALATMNT) traverse the membrane as a helical segment. Over 1231–1235 (KRQLS) the chain is Vacuolar. A helical membrane pass occupies residues 1236-1256 (SGMVGLLMSYSLEVTGSLTWI). Residues 1257-1559 (VRTTVTIETN…SLCEKGGYLK (303 aa)) lie on the Cytoplasmic side of the membrane. Residues 1302–1553 (IEFKNYSTKY…KTSIFYSLCE (252 aa)) enclose the ABC transporter 2 domain. Residue 1336 to 1343 (GRTGAGKS) coordinates ATP. Residues 1420–1433 (HLEKMLHSKPRGDD) are compositionally biased toward basic and acidic residues. A disordered region spans residues 1420–1439 (HLEKMLHSKPRGDDSNEEDG).

This sequence belongs to the ABC transporter superfamily.

It localises to the vacuole membrane. In terms of biological role, cooperates for the ATP-dependent vacuolar transport of bilirubin and glutathione conjugates. This Saccharomyces cerevisiae (strain ATCC 204508 / S288c) (Baker's yeast) protein is Bile pigment transporter 1 (BPT1).